Reading from the N-terminus, the 487-residue chain is Adenosylhomocysteinase (487 aa).

Residues Thr76, Asp151, and Glu212 each contribute to the substrate site. Thr213–Thr215 contacts NAD(+). Residues Lys242 and Asp246 each coordinate substrate. NAD(+) contacts are provided by residues Asn247, Gly276–Gly281, Glu299, Asn334, Ile355–His357, and Asn403.

The protein belongs to the adenosylhomocysteinase family. It depends on NAD(+) as a cofactor.

It localises to the cytoplasm. It catalyses the reaction S-adenosyl-L-homocysteine + H2O = L-homocysteine + adenosine. Its pathway is amino-acid biosynthesis; L-homocysteine biosynthesis; L-homocysteine from S-adenosyl-L-homocysteine: step 1/1. Its function is as follows. May play a key role in the regulation of the intracellular concentration of adenosylhomocysteine. This is Adenosylhomocysteinase from Bacteroides fragilis (strain YCH46).